Here is a 455-residue protein sequence, read N- to C-terminus: Nucleolar protein 12 (455 aa).

2 disordered regions span residues methionine 1–asparagine 104 and glutamine 117–alanine 142. Residues asparagine 24–lysine 37 show a composition bias toward basic and acidic residues. Residues proline 51–alanine 66 show a composition bias toward polar residues. Residues glutamate 68–glutamine 91 are compositionally biased toward acidic residues. Residues serine 124–lysine 141 show a composition bias toward basic and acidic residues. 2 RRM domains span residues arginine 160–histidine 258 and arginine 266–serine 351. Disordered stretches follow at residues leucine 333–valine 402 and alanine 420–valine 455. The span at lysine 339–arginine 348 shows a compositional bias: basic residues. Positions alanine 349 to phenylalanine 363 are enriched in polar residues. The segment covering lysine 425–isoleucine 438 has biased composition (basic residues). Positions arginine 439–valine 455 are enriched in basic and acidic residues.

This sequence belongs to the RRM RBM34 family.

The protein localises to the nucleus. It is found in the nucleolus. Involved in pre-25S rRNA processing. This chain is Nucleolar protein 12 (NOP12), found in Candida albicans (strain SC5314 / ATCC MYA-2876) (Yeast).